Here is a 104-residue protein sequence, read N- to C-terminus: UPF0235 protein Paes_1868 (104 aa).

It belongs to the UPF0235 family.

The sequence is that of UPF0235 protein Paes_1868 from Prosthecochloris aestuarii (strain DSM 271 / SK 413).